The following is a 130-amino-acid chain: Small ribosomal subunit protein uS8 (130 aa).

K88 bears the N6-succinyllysine mark.

It belongs to the universal ribosomal protein uS8 family. As to quaternary structure, component of the 40S ribosomal subunit. Part of the small subunit (SSU) processome, composed of more than 70 proteins and the RNA chaperone small nucleolar RNA (snoRNA) U3.

The protein resides in the cytoplasm. It is found in the nucleus. It localises to the nucleolus. Component of the small ribosomal subunit. Part of the small subunit (SSU) processome, first precursor of the small eukaryotic ribosomal subunit. During the assembly of the SSU processome in the nucleolus, many ribosome biogenesis factors, an RNA chaperone and ribosomal proteins associate with the nascent pre-rRNA and work in concert to generate RNA folding, modifications, rearrangements and cleavage as well as targeted degradation of pre-ribosomal RNA by the RNA exosome. Required for proper erythropoiesis. This Pongo abelii (Sumatran orangutan) protein is Small ribosomal subunit protein uS8 (RPS15A).